Consider the following 211-residue polypeptide: MFDIGVGELTLIAVVALVVLGPERLPKAARFAGLWVRRARMQWDSVKQELERELEAEELKRSLQDVQASLREAEDQLRNKQQQVEQGARALHDDVSRDIDIRSSATPVATPLELAHADLSASAHVDAAAGAAAGAGPAPAPAAPVIAQAQPIAPAPHQTLVPAPHDTIVPAPHAAHLTSAPAPPVTVAPVDAGTSASPTPSEPTKIQEKQP.

Residues 1 to 21 (MFDIGVGELTLIAVVALVVLG) form a helical membrane-spanning segment. A disordered region spans residues 175–211 (AHLTSAPAPPVTVAPVDAGTSASPTPSEPTKIQEKQP). Over residues 194-204 (TSASPTPSEPT) the composition is skewed to polar residues.

Belongs to the TatB family. In terms of assembly, the Tat system comprises two distinct complexes: a TatABC complex, containing multiple copies of TatA, TatB and TatC subunits, and a separate TatA complex, containing only TatA subunits. Substrates initially bind to the TatABC complex, which probably triggers association of the separate TatA complex to form the active translocon.

It localises to the cell inner membrane. Its function is as follows. Part of the twin-arginine translocation (Tat) system that transports large folded proteins containing a characteristic twin-arginine motif in their signal peptide across membranes. Together with TatC, TatB is part of a receptor directly interacting with Tat signal peptides. TatB may form an oligomeric binding site that transiently accommodates folded Tat precursor proteins before their translocation. The sequence is that of Sec-independent protein translocase protein TatB from Xanthomonas oryzae pv. oryzae (strain MAFF 311018).